A 404-amino-acid polypeptide reads, in one-letter code: Glycerol-1-phosphate dehydrogenase [NAD(P)+] (404 aa).

Residues aspartate 56, glycine 118 to aspartate 122, and threonine 140 to serine 143 contribute to the NAD(+) site. Substrate is bound at residue aspartate 145. Residue serine 149 coordinates NAD(+). Aspartate 192 is a substrate binding site. The Ni(2+) site is built by aspartate 192 and histidine 272. Histidine 276 contributes to the substrate binding site. Histidine 292 provides a ligand contact to Ni(2+).

This sequence belongs to the glycerol-1-phosphate dehydrogenase family. Homodimer. Requires Ni(2+) as cofactor.

The protein resides in the cytoplasm. It carries out the reaction sn-glycerol 1-phosphate + NAD(+) = dihydroxyacetone phosphate + NADH + H(+). The enzyme catalyses sn-glycerol 1-phosphate + NADP(+) = dihydroxyacetone phosphate + NADPH + H(+). Its function is as follows. Catalyzes the NAD(P)H-dependent reduction of dihydroxyacetonephosphate (DHAP or glycerone phosphate) to glycerol 1-phosphate (G1P). The G1P thus generated is probably used for the synthesis of phosphoglycerolipids in Gram-positive bacterial species. This is Glycerol-1-phosphate dehydrogenase [NAD(P)+] from Geobacillus stearothermophilus (Bacillus stearothermophilus).